The primary structure comprises 421 residues: MAATAVEFQRAQSLLSTDRNASIDILHAIVKRDVQDDDEEAVRVKEQSILELGGLLAKTGQAAELGGLLKYVRPFLNSISKAKAARLVRSLLDMFLDMEAATGQEVELCLECIEWAKSEKRTFLRQALEARLVSLYFDTKRYQEALQLGSQLLQELKKMDDKALLVELQLLESKTYHALSNLPKARAALTSARTTANAIYCPPKLQAALDMQSGIIHAAEEKDWKTAYSYFYEAFEGYDSIDSPRAITALKYMLLCKIMLNSPEDVQSLISGKLALRYAGRQTEALKCVAQASKNRSLADFEKALTEYKAELRDDPIISTHLTKLYDNLLEQNLIRVIEPFSRVQIEHISELIKLSKGDVERKLSQMILDQKFHGILDQGEGVLIVFDEPPVDKTYEASLETIQNMSKVVDSLYNKAKKLT.

One can recognise a PCI domain in the interval 227-391 (AYSYFYEAFE…GVLIVFDEPP (165 aa)).

Belongs to the proteasome subunit S9 family. As to quaternary structure, component of the lid subcomplex of the 19S proteasome regulatory particle complex (also named PA700 complex). The 26S proteasome consists of a 20S proteasome core and two 19S regulatory subunits.

The protein resides in the nucleus. Its subcellular location is the cytoplasm. It localises to the cytosol. In terms of biological role, component of the lid subcomplex of the 26S proteasome, a multiprotein complex involved in the ATP-dependent degradation of ubiquitinated proteins. In the complex, psmd11a is required for proteasome assembly. This is 26S proteasome non-ATPase regulatory subunit 11A (psmd11a) from Danio rerio (Zebrafish).